The following is a 301-amino-acid chain: Glycosyltransferase GlyG (301 aa).

Belongs to the glycosyltransferase 2 family.

It participates in protein modification; protein glycosylation. Functionally, involved in the polymorphic O-glycosylation of the serine-rich repeat protein PsrP. Catalyzes the third step in glycosylation PsrP in this bacteria. Transfers glucose from UDP-glucose to the terminal glucose moiety of already-glycosylated PsrP (using truncated substrates with PsrP SSR1-GlcNAc-Glc). Has a marked preference for PsrP substrate that has already been modified by GlcNAc and glucose. In vitro has hydrolytic activity against UDP-glucose and to a lesser extent against UDP-galactose. In terms of biological role, also catalyzes the fourth step in glycosylation of the serine-rich repeat protein PsrP in this bacteria. Can transfer the sugar from UDP-glucose (and much less well from UDP-galactose) to the terminal sugar moiety of PsrP-GlcNAc-Glc-Gal or of PsrP-GlcNAc-Glc-Glc. The protein is Glycosyltransferase GlyG of Streptococcus pneumoniae serotype 4 (strain ATCC BAA-334 / TIGR4).